A 300-amino-acid polypeptide reads, in one-letter code: Integrin-binding sialoprotein (300 aa).

The disordered stretch occupies residues Arg41–Asp258. 6 positions are modified to phosphoserine: Ser46, Ser51, Ser59, Ser60, Ser82, and Ser90. The segment covering Ser46 to Asp58 has biased composition (low complexity). The segment covering Ser59–Ala92 has biased composition (acidic residues). Residues Glu93–Leu102 show a composition bias toward polar residues. A glycan (N-linked (GlcNAc...) asparagine) is linked at Asn94. Residues Lys125–Glu136 show a composition bias toward basic and acidic residues. The span at Glu137–Glu160 shows a compositional bias: acidic residues. The residue at position 139 (Ser139) is a Phosphoserine. Polar residues-rich tracts occupy residues Gln161–Val173, Val193–Ala202, and Ile229–Pro243. Residues Asn164 and Asn169 are each glycosylated (N-linked (GlcNAc...) asparagine). The residue at position 266 (Ser266) is a Phosphoserine. An Integrin-binding motif motif is present at residues Arg272 to Asp274. Ser293 is subject to Phosphoserine. Sulfotyrosine is present on residues Tyr299 and Tyr300.

Monomer. Interacts with integrins; the interaction promotes cell adhesion.

It localises to the secreted. Functionally, binds tightly to hydroxyapatite. Appears to form an integral part of the mineralized matrix. Probably important to cell-matrix interaction. Promotes adhesion and migration of various cells via the alpha-V/beta-3 integrin receptor (ITGAV:ITGB3). This Sus scrofa (Pig) protein is Integrin-binding sialoprotein (IBSP).